The sequence spans 464 residues: Glutamate--tRNA ligase 2 (464 aa).

Residues Pro-11–Ser-21 carry the 'HIGH' region motif. Positions Lys-240 to Arg-244 match the 'KMSKS' region motif. Lys-243 contacts ATP.

The protein belongs to the class-I aminoacyl-tRNA synthetase family. Glutamate--tRNA ligase type 1 subfamily. In terms of assembly, monomer.

It is found in the cytoplasm. It catalyses the reaction tRNA(Glu) + L-glutamate + ATP = L-glutamyl-tRNA(Glu) + AMP + diphosphate. Its function is as follows. Catalyzes the attachment of glutamate to tRNA(Glu) in a two-step reaction: glutamate is first activated by ATP to form Glu-AMP and then transferred to the acceptor end of tRNA(Glu). The protein is Glutamate--tRNA ligase 2 of Rickettsia bellii (strain OSU 85-389).